We begin with the raw amino-acid sequence, 473 residues long: MAPPAARLALLSAAALTLAARPAPGPRPSPECFTANGADYRGTQSWTALQGGKPCLFWNETFQHPYNTLKYPNGEGGLGEHNYCRNPDGDVSPWCYVAEHEDGVYWKYCEIPACQMPGNLGCYKDHGNPPPLTGTSKTSNKLTIQTCISFCRSQRFKFAGMESGYACFCGNNPDYWKHGEAASTECNNVCFGDHTQPCGGDGRIILFDTLVGACGGNYSSMAAVVYSPDFPDTYATGRVCYWTIRVPGASRIHFNFTIFDIRDSADMVELLDGYTHRVLVRFDGRSRPPLSFNVSLDFVILYFFSDRINQAQGFAVLYQATKEEPPQERPAINQTLAEVITEQANLSVSAAHSSKVLYVITSSPSHPPQTVPGSHSWVPSVGASGHRVEGWTVYGLATLLILTVTAVVAKILLHVTFKSHRVTASGDLRDCRQPGTSGEIWTIFYEPSTTISIFKKKLKGQSQQDDRNPLVSD.

A signal peptide spans 1 to 19 (MAPPAARLALLSAAALTLA). Residues 21–392 (RPAPGPRPSP…ASGHRVEGWT (372 aa)) lie on the Extracellular side of the membrane. Residues 31 to 114 (ECFTANGADY…YWKYCEIPAC (84 aa)) enclose the Kringle domain. Disulfide bonds link C32/C114, C55/C95, C84/C109, C122/C186, C147/C167, C151/C169, C190/C198, and C214/C240. N-linked (GlcNAc...) asparagine glycosylation occurs at N59. In terms of domain architecture, WSC spans 116–210 (MPGNLGCYKD…DGRIILFDTL (95 aa)). The CUB domain maps to 214–321 (CGGNYSSMAA…QGFAVLYQAT (108 aa)). Residues N217, N255, N293, N333, and N345 are each glycosylated (N-linked (GlcNAc...) asparagine). The helical transmembrane segment at 393–413 (VYGLATLLILTVTAVVAKILL) threads the bilayer. Residues 414–473 (HVTFKSHRVTASGDLRDCRQPGTSGEIWTIFYEPSTTISIFKKKLKGQSQQDDRNPLVSD) lie on the Cytoplasmic side of the membrane. An essential for apoptotic activity region spans residues 414 to 473 (HVTFKSHRVTASGDLRDCRQPGTSGEIWTIFYEPSTTISIFKKKLKGQSQQDDRNPLVSD).

In terms of assembly, forms a ternary complex with DKK1 and LRP6. Interacts with LRP6 in a DKK1-dependent manner. Interacts with DKK1 and RSPO1 (via FU repeats).

The protein resides in the cell membrane. Its function is as follows. Receptor for Dickkopf proteins. Cooperates with DKK1/2 to inhibit Wnt/beta-catenin signaling by promoting the endocytosis of Wnt receptors LRP5 and LRP6. In the absence of DKK1, potentiates Wnt-beta-catenin signaling by maintaining LRP5 or LRP6 at the cell membrane. Can trigger apoptosis in a Wnt-independent manner and this apoptotic activity is inhibited upon binding of the ligand DKK1. Plays a role in limb development; attenuates Wnt signaling in the developing limb to allow normal limb patterning and can also negatively regulate bone formation. Modulates cell fate decisions in the developing cochlea with an inhibitory role in hair cell fate specification. This Rattus norvegicus (Rat) protein is Kremen protein 1 (Kremen1).